We begin with the raw amino-acid sequence, 592 residues long: A-type ATP synthase subunit A (592 aa).

231–238 (GGFGTGKT) serves as a coordination point for ATP.

The protein belongs to the ATPase alpha/beta chains family. As to quaternary structure, has multiple subunits with at least A(3), B(3), C, D, E, F, H, I and proteolipid K(x).

The protein resides in the cell membrane. The enzyme catalyses ATP + H2O + 4 H(+)(in) = ADP + phosphate + 5 H(+)(out). In terms of biological role, component of the A-type ATP synthase that produces ATP from ADP in the presence of a proton gradient across the membrane. The A chain is the catalytic subunit. This chain is A-type ATP synthase subunit A, found in Staphylothermus marinus (strain ATCC 43588 / DSM 3639 / JCM 9404 / F1).